Consider the following 208-residue polypeptide: Putative 3-methyladenine DNA glycosylase (208 aa).

Belongs to the DNA glycosylase MPG family.

The protein is Putative 3-methyladenine DNA glycosylase of Lactobacillus delbrueckii subsp. bulgaricus (strain ATCC BAA-365 / Lb-18).